The following is a 427-amino-acid chain: 3-phosphoshikimate 1-carboxyvinyltransferase (427 aa).

Positions 23, 24, and 28 each coordinate 3-phosphoshikimate. Lys23 is a binding site for phosphoenolpyruvate. Positions 97 and 125 each coordinate phosphoenolpyruvate. 3-phosphoshikimate-binding residues include Ser169, Ser170, Gln171, Ser197, Asp313, Asn336, and Lys340. A phosphoenolpyruvate-binding site is contributed by Gln171. The active-site Proton acceptor is the Asp313. Phosphoenolpyruvate-binding residues include Arg344, Arg386, and Lys411.

It belongs to the EPSP synthase family. Monomer.

Its subcellular location is the cytoplasm. It catalyses the reaction 3-phosphoshikimate + phosphoenolpyruvate = 5-O-(1-carboxyvinyl)-3-phosphoshikimate + phosphate. The protein operates within metabolic intermediate biosynthesis; chorismate biosynthesis; chorismate from D-erythrose 4-phosphate and phosphoenolpyruvate: step 6/7. In terms of biological role, catalyzes the transfer of the enolpyruvyl moiety of phosphoenolpyruvate (PEP) to the 5-hydroxyl of shikimate-3-phosphate (S3P) to produce enolpyruvyl shikimate-3-phosphate and inorganic phosphate. This chain is 3-phosphoshikimate 1-carboxyvinyltransferase, found in Yersinia ruckeri.